The primary structure comprises 670 residues: Cyclic di-GMP phosphodiesterase PdeA (670 aa).

The EAL domain maps to 428–670; sequence QNKIFQYILK…GFLWHKPEPI (243 aa).

It catalyses the reaction 3',3'-c-di-GMP + H2O = 5'-phosphoguanylyl(3'-&gt;5')guanosine + H(+). In terms of biological role, phosphodiesterase (PDE) that catalyzes the hydrolysis of cyclic diguanylate (c-di-GMP) to pGpG. In Borreliella burgdorferi (strain ATCC 35210 / DSM 4680 / CIP 102532 / B31) (Borrelia burgdorferi), this protein is Cyclic di-GMP phosphodiesterase PdeA.